A 264-amino-acid polypeptide reads, in one-letter code: Small ribosomal subunit protein uS3 (264 aa).

The region spanning 39 to 107 is the KH type-2 domain; the sequence is VREYLKKKLK…PVHVNIEEIR (69 aa). The tract at residues 214–264 is disordered; the sequence is PVETAAPREEERRPRRAPRGDRPDGARNGRPGGGRGRAPRKADAAPAPEGE. The segment covering 219–240 has biased composition (basic and acidic residues); that stretch reads APREEERRPRRAPRGDRPDGAR.

Belongs to the universal ribosomal protein uS3 family. In terms of assembly, part of the 30S ribosomal subunit. Forms a tight complex with proteins S10 and S14.

Functionally, binds the lower part of the 30S subunit head. Binds mRNA in the 70S ribosome, positioning it for translation. This Bordetella avium (strain 197N) protein is Small ribosomal subunit protein uS3.